A 443-amino-acid polypeptide reads, in one-letter code: MKGIEKLKEGYPLLNKLIATEEVFWVNPNMEKYETAIKDSPLSEENVKDAEERLKRFASYIAKVFPETKETKGIIESPLLKIPSMKQALEKHYKQPILGELLLKCDSHLPISGSIKARGGIYEVLKHAEQLALQHGMLTEEDDYSILDSDTCREFFAKYSIAVGSTGNLGLSIGIMSAKLGFNVTVHMSADAKQWKKDLLRSKGVNVIEYEADYSKAVKEGRQQADTDPSCYFVDDENSHDLFLGYAVAASRLQKQLEELEIVVDEEHPLFVYLPCGVGGGPGGVAFGLKLLYKDNVHCFFAEPTHSPCMLLGLMTGLHDKIAVQDIGIDNVTDADGLAVGRPSGFVGKTMEPFLSGNYTVSDEELYRLLKELADTENIYLEPSALAGMIGPVKVCKEDAYLQEQQLMKEMKKGTHIVWGTGGSMVPEDVINGYYKTGERLTI.

K116 carries the N6-(pyridoxal phosphate)lysine modification.

The protein belongs to the serine/threonine dehydratase family. DsdA subfamily. Pyridoxal 5'-phosphate is required as a cofactor.

It catalyses the reaction D-serine = pyruvate + NH4(+). The chain is Probable D-serine dehydratase from Bacillus cereus (strain AH187).